A 594-amino-acid chain; its full sequence is Dictomallein-4 (594 aa).

A signal peptide spans 1–18; that stretch reads MKLVLIFLIINFLLIINC. The Peptidase M66 domain maps to 147-408; sequence PDVSQDYTLK…QNYFKNSIYY (262 aa). Residue histidine 300 participates in Zn(2+) binding. Glutamate 301 is a catalytic residue. The Zn(2+) site is built by histidine 304 and histidine 310.

This sequence belongs to the dictomallein family. The cofactor is Zn(2+).

Its subcellular location is the secreted. The protein is Dictomallein-4 (dtmlD) of Dictyostelium discoideum (Social amoeba).